We begin with the raw amino-acid sequence, 598 residues long: Mitogen-activated protein kinase 19 (598 aa).

Positions 25–316 (YRILEVIGKG…AAEALADPYF (292 aa)) constitute a Protein kinase domain. Residues 31 to 39 (IGKGSYGVV) and Lys-54 each bind ATP. Asp-151 (proton acceptor) is an active-site residue. Thr-187 is subject to Phosphothreonine. The TXY signature appears at 187–189 (TDY). Tyr-189 carries the post-translational modification Phosphotyrosine. Phosphothreonine is present on Thr-192. Residues 396 to 486 (GKSGPVIPPD…VTYENDRNLK (91 aa)) form a disordered region. Over residues 414-425 (SAVHSSAVNSNA) the composition is skewed to low complexity.

This sequence belongs to the protein kinase superfamily. CMGC Ser/Thr protein kinase family. MAP kinase subfamily. Dually phosphorylated on Thr-187 and Tyr-189, which activates the enzyme.

The enzyme catalyses L-seryl-[protein] + ATP = O-phospho-L-seryl-[protein] + ADP + H(+). The catalysed reaction is L-threonyl-[protein] + ATP = O-phospho-L-threonyl-[protein] + ADP + H(+). Its activity is regulated as follows. Activated by threonine and tyrosine phosphorylation. The sequence is that of Mitogen-activated protein kinase 19 (MPK19) from Arabidopsis thaliana (Mouse-ear cress).